A 535-amino-acid polypeptide reads, in one-letter code: Calcium-dependent protein kinase 1 (535 aa).

Positions 1–34 are disordered; that stretch reads MGCNQSKSANDVRGNKVNNVNSKKKNNKREDIND. Residue G2 is the site of N-myristoyl glycine attachment. A lipid anchor (S-palmitoyl cysteine) is attached at C3. The 268-residue stretch at 57-324 folds into the Protein kinase domain; it reads YFKVRKLGSG…AEEALNSRWI (268 aa). Residues 63 to 71 and K86 contribute to the ATP site; that span reads LGSGAYGEV. A Phosphoserine modification is found at S65. At S117 the chain carries Phosphoserine. Catalysis depends on D190, which acts as the Proton acceptor. Residues S216 and S219 each carry the phosphoserine modification. T230 carries the phosphothreonine modification. S334 is modified (phosphoserine). The J domain autoinhibitory motif signature appears at 345–352; the sequence is NMRKFEGS. The j domain stretch occupies residues 345-363; the sequence is NMRKFEGSQKLAQAAILFI. The J domain interacts with the EF-hand domains signature appears at 353 to 363; the sequence is QKLAQAAILFI. 4 EF-hand domains span residues 371 to 406, 415 to 450, 451 to 486, and 497 to 532; these read EERK…LRNF, NVEE…KQIL, FSEE…GFYF, and VSEK…ICDN. The Ca(2+) site is built by D384, N386, D388, Q390, E395, D428, D430, N432, Y434, E439, D464, D466, S468, K470, E475, D510, N512, D514, M516, and E521.

Belongs to the protein kinase superfamily. Ser/Thr protein kinase family. CDPK subfamily. In terms of assembly, monomer. It depends on Mg(2+) as a cofactor. Myristoylated. Myristoylation and palmitoylation are required for the localization to the parasitophorous vacuole membrane. Post-translationally, palmitoylated. Palmitoylation increases in merozoites in response to low level of extracellular K(+) in the host blood. Myristoylation and palmitoylation are required for the localization to the parasitophorous vacuole membrane. In terms of processing, phosphorylation at Thr-230 may regulate CDPK1 kinase activity. Phosphorylation increases in response to an increase in intracellular Ca(2+) levels. Autophosphorylated in vitro. Autophosphorylation does not affect membrane localization in vitro.

It localises to the membrane. The protein resides in the cell membrane. It is found in the parasitophorous vacuole membrane. Its subcellular location is the cytoplasm. The protein localises to the cell projection. It localises to the cilium. The protein resides in the flagellum. It is found in the host cell membrane. The enzyme catalyses L-seryl-[protein] + ATP = O-phospho-L-seryl-[protein] + ADP + H(+). The catalysed reaction is L-threonyl-[protein] + ATP = O-phospho-L-threonyl-[protein] + ADP + H(+). With respect to regulation, activated by calcium. Upon calcium binding to the EF-hand domains, the C-terminus of the junction domain (J domain) undergoes a conformational change which results in the dissociation of the pseudo-substrate inhibitory motif from the catalytic domain. This, in turn may facilitate the autophosphorylation of the activation loop at Thr-230, which leads to the kinase activation. Its function is as follows. Calcium-dependent protein kinase which acts as a sensor and effector of intracellular Ca(2+) levels probably in part downstream of cGMP-activated PKG kinase. During the liver stage, involved in sporozoite motility and thus in sporozoite invasion of host hepatocytes, probably together with CDPK4 and CDPK5. In the mosquito midgut and during the last stage of male gamete exflagellation, may play a role in the rupture of the host erythrocyte membrane. In the mosquito midgut, required for the differentiation of the zygote into the ookinete by promoting the translational activation of a subset of repressed mRNAs; these mRNAs are kept repressed in the zygote by the DOZI- or CITH-containing mRNP complexes. Dispensable during the asexual blood stage. The sequence is that of Calcium-dependent protein kinase 1 from Plasmodium yoelii yoelii.